Here is a 287-residue protein sequence, read N- to C-terminus: Ribosomal RNA small subunit methyltransferase A (287 aa).

S-adenosyl-L-methionine is bound by residues N28, L30, G55, E76, D101, and N125.

This sequence belongs to the class I-like SAM-binding methyltransferase superfamily. rRNA adenine N(6)-methyltransferase family. RsmA subfamily.

Its subcellular location is the cytoplasm. It carries out the reaction adenosine(1518)/adenosine(1519) in 16S rRNA + 4 S-adenosyl-L-methionine = N(6)-dimethyladenosine(1518)/N(6)-dimethyladenosine(1519) in 16S rRNA + 4 S-adenosyl-L-homocysteine + 4 H(+). In terms of biological role, specifically dimethylates two adjacent adenosines (A1518 and A1519) in the loop of a conserved hairpin near the 3'-end of 16S rRNA in the 30S particle. May play a critical role in biogenesis of 30S subunits. In Alkaliphilus oremlandii (strain OhILAs) (Clostridium oremlandii (strain OhILAs)), this protein is Ribosomal RNA small subunit methyltransferase A.